A 351-amino-acid polypeptide reads, in one-letter code: Uroporphyrinogen decarboxylase (351 aa).

Substrate is bound by residues 32 to 36 (RQAGR), Phe51, Asp82, Tyr157, Ser211, and His326.

This sequence belongs to the uroporphyrinogen decarboxylase family. Homodimer.

The protein resides in the cytoplasm. The enzyme catalyses uroporphyrinogen III + 4 H(+) = coproporphyrinogen III + 4 CO2. It functions in the pathway porphyrin-containing compound metabolism; protoporphyrin-IX biosynthesis; coproporphyrinogen-III from 5-aminolevulinate: step 4/4. In terms of biological role, catalyzes the decarboxylation of four acetate groups of uroporphyrinogen III to yield coproporphyrinogen III. The polypeptide is Uroporphyrinogen decarboxylase (Caulobacter vibrioides (strain ATCC 19089 / CIP 103742 / CB 15) (Caulobacter crescentus)).